We begin with the raw amino-acid sequence, 629 residues long: Flap endonuclease GEN-like 1 (629 aa).

The tract at residues 1–87 (MGVGGSFWDL…DGQPSPLKSQ (87 aa)) is N-domain. Positions 2–98 (GVGGSFWDLL…RAARFFRGSG (97 aa)) are XPG-N domain. 7 residues coordinate Mg(2+): Asp-31, Asp-78, Glu-148, Glu-150, Asp-169, Asp-171, and Asp-221. The XPG-I domain stretch occupies residues 136–221 (EYLGMPVLRA…VAMALLVGSD (86 aa)). The interval 136–225 (EYLGMPVLRA…LLVGSDHDLH (90 aa)) is I-domain. The 5'-3' exonuclease domain stretch occupies residues 221-421 (DHDLHGVPGF…MLPMLSTIYL (201 aa)). Residues 594 to 617 (KKGLSGDSGKDGSRKSSDVDLSKN) are disordered. A compositionally biased stretch (basic and acidic residues) spans 601-614 (SGKDGSRKSSDVDL).

The protein belongs to the XPG/RAD2 endonuclease family. GEN subfamily. As to quaternary structure, monomer. Interacts with PCNA. PCNA stimulates the nuclease activity without altering cleavage specificity. The cofactor is Mg(2+). As to expression, highly expressed in anthers. Expressed in roots and leaves.

Its subcellular location is the nucleus. In terms of biological role, endonuclease which cleaves flap structures at the junction between single-stranded DNA and double-stranded DNA. Possesses both single-stranded and double-stranded DNA-binding activities. Involved in early microspore development, but does not alter meiosis or tapetal cells development. Possesses Holliday junction (HJ) resolvase activity in vitro. Cleaves HJ at symmetrically related sites of the branch point. The chain is Flap endonuclease GEN-like 1 from Oryza sativa subsp. japonica (Rice).